A 464-amino-acid polypeptide reads, in one-letter code: MLAARRLLGWSLPARVSVRFSGDTTAPKKTSFGSLKDEDRIFTNLYGRHDWRLKGALSRGDWYKTKEILLKGPDWILGEIKTSGLRGRGGAGFPTGLKWSFMNKPSDGRPKYLVVNADEGEPGTCKDREIIRHDPHKLVEGCLVGGRAMGARAAYIYIRGEFYNEASNLQVAIREAYEAGLIGKNACGSGYDFDVFVVRGAGAYICGEETALIESIEGKQGKPRLKPPFPADVGVFGCPTTVANVETVAVSPTICRRGGTWFAGFGRERNSGTKLFNISGHVNYPCTVEEEMSVPLKELIEKHAGGVTGGWDNLLAVIPGGSSTPLIPKSVCETVLMDFDALVQAQTGLGTAAVIVMDRSTDIVKAIARLIEFYKHESCGQCTPCREGVDWMNKVMARFVRGDAQPAEIDSLWEISKQIEGHTICALGDGAAWPVQGLIRHFRPELEERMQRFAQQHQAQQAAS.

The N-terminal 20 residues, 1-20 (MLAARRLLGWSLPARVSVRF), are a transit peptide targeting the mitochondrion. The residue at position 81 (K81) is an N6-acetyllysine; alternate. K81 carries the N6-succinyllysine; alternate modification. 87 to 96 (GRGGAGFPTG) serves as a coordination point for NADH. K104 carries the N6-acetyllysine modification. 199 to 247 (RGAGAYICGEETALIESIEGKQGKPRLKPPFPADVGVFGCPTTVANVET) contributes to the FMN binding site. At R257 the chain carries Omega-N-methylarginine. K375 carries the N6-acetyllysine modification. Residues C379, C382, C385, and C425 each contribute to the [4Fe-4S] cluster site.

Belongs to the complex I 51 kDa subunit family. Core subunit of respiratory chain NADH dehydrogenase (Complex I) which is composed of 45 different subunits. This is a component of the flavoprotein-sulfur (FP) fragment of the enzyme. Interacts with RAB5IF. It depends on FMN as a cofactor. [4Fe-4S] cluster serves as cofactor.

The protein localises to the mitochondrion inner membrane. The enzyme catalyses a ubiquinone + NADH + 5 H(+)(in) = a ubiquinol + NAD(+) + 4 H(+)(out). In terms of biological role, core subunit of the mitochondrial membrane respiratory chain NADH dehydrogenase (Complex I) which catalyzes electron transfer from NADH through the respiratory chain, using ubiquinone as an electron acceptor. Part of the peripheral arm of the enzyme, where the electrons from NADH are accepted by flavin mononucleotide (FMN) and then passed along a chain of iron-sulfur clusters by electron tunnelling to the final acceptor ubiquinone. Contains FMN, which is the initial electron acceptor as well as one iron-sulfur cluster. The polypeptide is NADH dehydrogenase [ubiquinone] flavoprotein 1, mitochondrial (Pongo pygmaeus (Bornean orangutan)).